The sequence spans 859 residues: Envelope glycoprotein gp160 (859 aa).

An N-terminal signal peptide occupies residues methionine 1–lysine 23. Residues glutamine 24–tyrosine 678 lie on the Extracellular side of the membrane. Residue asparagine 37 is glycosylated (N-linked (GlcNAc...) asparagine; by host). A disulfide bridge links cysteine 44 with cysteine 57. N-linked (GlcNAc...) asparagine; by host glycans are attached at residues asparagine 70, asparagine 112, asparagine 122, asparagine 142, asparagine 150, asparagine 165, asparagine 191, asparagine 206, asparagine 238, asparagine 241, asparagine 248, asparagine 272, asparagine 278, asparagine 289, asparagine 300, asparagine 310, asparagine 343, asparagine 367, asparagine 400, asparagine 410, asparagine 413, asparagine 450, asparagine 464, and asparagine 468. 5 cysteine pairs are disulfide-bonded: cysteine 101–cysteine 214, cysteine 108–cysteine 205, cysteine 113–cysteine 164, cysteine 227–cysteine 257, and cysteine 237–cysteine 249. Residues cysteine 113–glutamine 163 form a V1 region. Residues cysteine 164–cysteine 205 are V2. The interval cysteine 305–tryptophan 337 is V3. A disulfide bridge links cysteine 305 with cysteine 338. Intrachain disulfides connect cysteine 392/cysteine 449 and cysteine 399/cysteine 422. Residues cysteine 399–cysteine 422 form a V4 region. Positions serine 465–valine 471 are V5. The interval glycine 514–threonine 534 is fusion peptide. Residues leucine 577–glutamine 593 form an immunosuppression region. N-linked (GlcNAc...) asparagine; by host glycosylation is found at asparagine 613, asparagine 622, and asparagine 638. A coiled-coil region spans residues glutamine 626–glutamine 647. The interval lysine 659–histidine 680 is MPER; binding to GalCer. A helical transmembrane segment spans residues isoleucine 679–valine 699. Residues glutamine 700–leucine 859 are Cytoplasmic-facing. Positions tyrosine 709 to valine 712 match the YXXV motif; contains endocytosis signal motif. Positions serine 715–aspartate 744 are disordered. Cysteine 775 carries S-palmitoyl cysteine; by host lipidation. A Di-leucine internalization motif motif is present at residues leucine 858–leucine 859.

As to quaternary structure, the mature envelope protein (Env) consists of a homotrimer of non-covalently associated gp120-gp41 heterodimers. The resulting complex protrudes from the virus surface as a spike. There seems to be as few as 10 spikes on the average virion. Interacts with human CD4, CCR5 and CXCR4, to form a P4HB/PDI-CD4-CXCR4-gp120 complex. Gp120 also interacts with the C-type lectins CD209/DC-SIGN and CLEC4M/DC-SIGNR (collectively referred to as DC-SIGN(R)). Gp120 and gp41 interact with GalCer. In terms of assembly, the mature envelope protein (Env) consists of a homotrimer of non-covalently associated gp120-gp41 heterodimers. The resulting complex protrudes from the virus surface as a spike. There seems to be as few as 10 spikes on the average virion. Post-translationally, specific enzymatic cleavages in vivo yield mature proteins. Envelope glycoproteins are synthesized as an inactive precursor that is heavily N-glycosylated and processed likely by host cell furin in the Golgi to yield the mature SU and TM proteins. The cleavage site between SU and TM requires the minimal sequence [KR]-X-[KR]-R. In terms of processing, palmitoylation of the transmembrane protein and of Env polyprotein (prior to its proteolytic cleavage) is essential for their association with host cell membrane lipid rafts. Palmitoylation is therefore required for envelope trafficking to classical lipid rafts, but not for viral replication.

Its subcellular location is the virion membrane. The protein resides in the host cell membrane. The protein localises to the host endosome membrane. The surface protein gp120 (SU) attaches the virus to the host lymphoid cell by binding to the primary receptor CD4. This interaction induces a structural rearrangement creating a high affinity binding site for a chemokine coreceptor like CXCR4 and/or CCR5. This peculiar 2 stage receptor-interaction strategy allows gp120 to maintain the highly conserved coreceptor-binding site in a cryptic conformation, protected from neutralizing antibodies. Since CD4 also displays a binding site for the disulfide-isomerase P4HB/PDI, a P4HB/PDI-CD4-CXCR4-gp120 complex may form. In that complex, P4HB/PDI could reach and reduce gp120 disulfide bonds, causing major conformational changes in gp120. TXN, another PDI family member could also be involved in disulfide rearrangements in Env during fusion. These changes are transmitted to the transmembrane protein gp41 and are thought to activate its fusogenic potential by unmasking its fusion peptide. Its function is as follows. The surface protein gp120 is a ligand for CD209/DC-SIGN and CLEC4M/DC-SIGNR, which are respectively found on dendritic cells (DCs), and on endothelial cells of liver sinusoids and lymph node sinuses. These interactions allow capture of viral particles at mucosal surfaces by these cells and subsequent transmission to permissive cells. DCs are professional antigen presenting cells, critical for host immunity by inducing specific immune responses against a broad variety of pathogens. They act as sentinels in various tissues where they take up antigen, process it, and present it to T-cells following migration to lymphoid organs. HIV subverts the migration properties of dendritic cells to gain access to CD4+ T-cells in lymph nodes. Virus transmission to permissive T-cells occurs either in trans (without DCs infection, through viral capture and transmission), or in cis (following DCs productive infection, through the usual CD4-gp120 interaction), thereby inducing a robust infection. In trans infection, bound virions remain infectious over days and it is proposed that they are not degraded, but protected in non-lysosomal acidic organelles within the DCs close to the cell membrane thus contributing to the viral infectious potential during DCs' migration from the periphery to the lymphoid tissues. On arrival at lymphoid tissues, intact virions recycle back to DCs' cell surface allowing virus transmission to CD4+ T-cells. Virion capture also seems to lead to MHC-II-restricted viral antigen presentation, and probably to the activation of HIV-specific CD4+ cells. In terms of biological role, the transmembrane protein gp41 (TM) acts as a class I viral fusion protein. Under the current model, the protein has at least 3 conformational states: pre-fusion native state, pre-hairpin intermediate state, and post-fusion hairpin state. During fusion of viral and target intracellular membranes, the coiled coil regions (heptad repeats) assume a trimer-of-hairpins structure, positioning the fusion peptide in close proximity to the C-terminal region of the ectodomain. The formation of this structure appears to drive apposition and subsequent fusion of viral and target cell membranes. Complete fusion occurs in host cell endosomes and is dynamin-dependent, however some lipid transfer might occur at the plasma membrane. The virus undergoes clathrin-dependent internalization long before endosomal fusion, thus minimizing the surface exposure of conserved viral epitopes during fusion and reducing the efficacy of inhibitors targeting these epitopes. Membranes fusion leads to delivery of the nucleocapsid into the cytoplasm. Functionally, the envelope glycoprotein gp160 precursor down-modulates cell surface CD4 antigen by interacting with it in the endoplasmic reticulum and blocking its transport to the cell surface. The gp120-gp41 heterodimer seems to contribute to T-cell depletion during HIV-1 infection. The envelope glycoproteins expressed on the surface of infected cells induce apoptosis through an interaction with uninfected cells expressing the receptor (CD4) and the coreceptors CXCR4 or CCR5. This type of bystander killing may be obtained by at least three distinct mechanisms. First, the interaction between the 2 cells can induce cellular fusion followed by nuclear fusion within the syncytium. Syncytia are condemned to die from apoptosis. Second, the 2 interacting cells may not fuse entirely and simply exchange plasma membrane lipids, after a sort of hemifusion process, followed by rapid death. Third, it is possible that virus-infected cells, on the point of undergoing apoptosis, fuse with CD4-expressing cells, in which case apoptosis is rapidly transmitted from one cell to the other and thus occurs in a sort of contagious fashion. Its function is as follows. The gp120-gp41 heterodimer allows rapid transcytosis of the virus through CD4 negative cells such as simple epithelial monolayers of the intestinal, rectal and endocervical epithelial barriers. Both gp120 and gp41 specifically recognize glycosphingolipids galactosyl-ceramide (GalCer) or 3' sulfo-galactosyl-ceramide (GalS) present in the lipid rafts structures of epithelial cells. Binding to these alternative receptors allows the rapid transcytosis of the virus through the epithelial cells. This transcytotic vesicle-mediated transport of virions from the apical side to the basolateral side of the epithelial cells does not involve infection of the cells themselves. This chain is Envelope glycoprotein gp160 (env), found in Human immunodeficiency virus type 2 subtype B (isolate D205) (HIV-2).